Here is a 941-residue protein sequence, read N- to C-terminus: Glycine dehydrogenase (decarboxylating) (941 aa).

Lysine 692 bears the N6-(pyridoxal phosphate)lysine mark.

The protein belongs to the GcvP family. As to quaternary structure, the glycine cleavage system is composed of four proteins: P, T, L and H. Pyridoxal 5'-phosphate is required as a cofactor.

It catalyses the reaction N(6)-[(R)-lipoyl]-L-lysyl-[glycine-cleavage complex H protein] + glycine + H(+) = N(6)-[(R)-S(8)-aminomethyldihydrolipoyl]-L-lysyl-[glycine-cleavage complex H protein] + CO2. Functionally, the glycine cleavage system catalyzes the degradation of glycine. The P protein binds the alpha-amino group of glycine through its pyridoxal phosphate cofactor; CO(2) is released and the remaining methylamine moiety is then transferred to the lipoamide cofactor of the H protein. This Mycobacterium tuberculosis (strain ATCC 25177 / H37Ra) protein is Glycine dehydrogenase (decarboxylating).